The following is a 187-amino-acid chain: Ribosome-recycling factor (187 aa).

Belongs to the RRF family.

The protein localises to the cytoplasm. Functionally, responsible for the release of ribosomes from messenger RNA at the termination of protein biosynthesis. May increase the efficiency of translation by recycling ribosomes from one round of translation to another. The chain is Ribosome-recycling factor from Roseobacter denitrificans (strain ATCC 33942 / OCh 114) (Erythrobacter sp. (strain OCh 114)).